Consider the following 103-residue polypeptide: Large ribosomal subunit protein bL21 (103 aa).

Belongs to the bacterial ribosomal protein bL21 family. Part of the 50S ribosomal subunit. Contacts protein L20.

This protein binds to 23S rRNA in the presence of protein L20. In Azoarcus sp. (strain BH72), this protein is Large ribosomal subunit protein bL21.